A 143-amino-acid chain; its full sequence is Large ribosomal subunit protein uL13 (143 aa).

It belongs to the universal ribosomal protein uL13 family. Part of the 50S ribosomal subunit.

Functionally, this protein is one of the early assembly proteins of the 50S ribosomal subunit, although it is not seen to bind rRNA by itself. It is important during the early stages of 50S assembly. This chain is Large ribosomal subunit protein uL13, found in Prochlorococcus marinus (strain MIT 9312).